The sequence spans 292 residues: ATP synthase gamma chain (292 aa).

This sequence belongs to the ATPase gamma chain family. As to quaternary structure, F-type ATPases have 2 components, CF(1) - the catalytic core - and CF(0) - the membrane proton channel. CF(1) has five subunits: alpha(3), beta(3), gamma(1), delta(1), epsilon(1). CF(0) has three main subunits: a, b and c.

The protein localises to the cell membrane. Produces ATP from ADP in the presence of a proton gradient across the membrane. The gamma chain is believed to be important in regulating ATPase activity and the flow of protons through the CF(0) complex. In Prosthecochloris aestuarii (strain DSM 271 / SK 413), this protein is ATP synthase gamma chain.